The chain runs to 155 residues: Transcription antitermination protein NusB (155 aa).

The protein belongs to the NusB family.

In terms of biological role, involved in transcription antitermination. Required for transcription of ribosomal RNA (rRNA) genes. Binds specifically to the boxA antiterminator sequence of the ribosomal RNA (rrn) operons. The sequence is that of Transcription antitermination protein NusB from Ralstonia pickettii (strain 12J).